A 463-amino-acid chain; its full sequence is Glycine--tRNA ligase (463 aa).

Positions 98 and 170 each coordinate substrate. ATP-binding positions include 202–204, 212–217, 287–288, and 331–334; these read RNE, FRTREF, EL, and GIER. 217–221 contacts substrate; sequence FEQFE. Residue 327–331 coordinates substrate; the sequence is EPSLG.

It belongs to the class-II aminoacyl-tRNA synthetase family. In terms of assembly, homodimer.

The protein resides in the cytoplasm. The catalysed reaction is tRNA(Gly) + glycine + ATP = glycyl-tRNA(Gly) + AMP + diphosphate. In terms of biological role, catalyzes the attachment of glycine to tRNA(Gly). This is Glycine--tRNA ligase from Mycoplasmoides gallisepticum (strain R(low / passage 15 / clone 2)) (Mycoplasma gallisepticum).